Reading from the N-terminus, the 334-residue chain is MAVASVAAALLAALGGALWLAARRFSGPRNQRQQGGGDPGLMHGKTVLITGANSGLGRATAAELLRLGARVIMGCRDRARAEEAAGQLRQELCQAGGAGPDGTDGQLVVKELDLASLRSVRAFCQELLQEEPRLDVLINNAGVFHCPYTKTEDGFEMQFGVNHLGHFLLTNLLLGLLKSSAPSRIVVVSSKLYKYGEINFEDLNSEQSYNKSFCYSRSKLANILFTRELARRLEGTNVTVNVLHPGIVRTNLGRHIHIPLLARPLFNLVSWAFFKTPLEGAQTSIYLACSPDVEGVSGRYFGDCKEEELLPKAMDESVARKLWDISEVMVGILK.

51 to 57 (GANSGLG) is an NADP(+) binding site. Position 190 (S190) interacts with substrate. The Proton acceptor role is filled by Y215.

This sequence belongs to the short-chain dehydrogenases/reductases (SDR) family.

The catalysed reaction is all-trans-retinol + NADP(+) = all-trans-retinal + NADPH + H(+). The enzyme catalyses 11-cis-retinol + NADP(+) = 11-cis-retinal + NADPH + H(+). It catalyses the reaction 9-cis-retinol + NADP(+) = 9-cis-retinal + NADPH + H(+). Retinol dehydrogenase with a clear preference for NADP. Displays high activity towards 9-cis, 11-cis and all-trans-retinol. Shows a very weak activity towards 13-cis-retinol. Has no activity towards steroids. The protein is Retinol dehydrogenase 14 (Rdh14) of Mus musculus (Mouse).